Reading from the N-terminus, the 184-residue chain is UPF0340 protein TTE0860 (184 aa).

It belongs to the UPF0340 family.

This chain is UPF0340 protein TTE0860, found in Caldanaerobacter subterraneus subsp. tengcongensis (strain DSM 15242 / JCM 11007 / NBRC 100824 / MB4) (Thermoanaerobacter tengcongensis).